We begin with the raw amino-acid sequence, 185 residues long: Ribosome-recycling factor (185 aa).

Residues 138-185 are disordered; that stretch reads ALKKQEKDGEITEDEERRLEKEVQKVTDESTKKIDQMADNKRKEIIQG.

The protein belongs to the RRF family.

The protein resides in the cytoplasm. Functionally, responsible for the release of ribosomes from messenger RNA at the termination of protein biosynthesis. May increase the efficiency of translation by recycling ribosomes from one round of translation to another. The chain is Ribosome-recycling factor from Lactobacillus delbrueckii subsp. bulgaricus (strain ATCC BAA-365 / Lb-18).